The sequence spans 881 residues: Translation initiation factor IF-2 (881 aa).

Disordered regions lie at residues 31 to 147 and 165 to 291; these read KLAQ…TKVP and SVVG…HYDE. Basic and acidic residues predominate over residues 42–55; sequence NSSEKPSAKVAEKV. The span at 68-77 shows a compositional bias: polar residues; that stretch reads ATPESVSSET. The span at 114–128 shows a compositional bias: acidic residues; sequence VEEEIASSTDSEPEV. A compositionally biased stretch (basic and acidic residues) spans 191–203; sequence PKKEDKPAPKERS. Residues 204–233 show a composition bias toward polar residues; sequence GQAQAKPQQSSEASSENKPHSPNNNRSSQP. Residues 235–267 are compositionally biased toward basic and acidic residues; the sequence is YRRDTSKKPGSDFRDRAKKDDNPKAFTGRDRYG. Residues 278-287 are compositionally biased toward basic residues; that stretch reads RKKRVQKTKK. A tr-type G domain is found at 387–556; it reads IRPPIVAFMG…ALQAEVLELK (170 aa). The G1 stretch occupies residues 396 to 403; that stretch reads GHVDHGKT. 396-403 provides a ligand contact to GTP; the sequence is GHVDHGKT. The G2 stretch occupies residues 421–425; sequence AITQH. Residues 442–445 are G3; it reads DTPG. GTP is bound by residues 442 to 446 and 496 to 499; these read DTPGH and NKCD. Residues 496 to 499 form a G4 region; it reads NKCD. The tract at residues 532–534 is G5; the sequence is SAK.

Belongs to the TRAFAC class translation factor GTPase superfamily. Classic translation factor GTPase family. IF-2 subfamily.

Its subcellular location is the cytoplasm. In terms of biological role, one of the essential components for the initiation of protein synthesis. Protects formylmethionyl-tRNA from spontaneous hydrolysis and promotes its binding to the 30S ribosomal subunits. Also involved in the hydrolysis of GTP during the formation of the 70S ribosomal complex. This is Translation initiation factor IF-2 from Chlamydia felis (strain Fe/C-56) (Chlamydophila felis).